The following is a 200-amino-acid chain: dITP/XTP pyrophosphatase (200 aa).

19–24 (TSNAGK) contacts substrate. Mg(2+) contacts are provided by glutamate 49 and aspartate 78. The Proton acceptor role is filled by aspartate 78. Residues serine 79, 158 to 161 (FGYD), lysine 181, and 186 to 187 (HR) each bind substrate.

Belongs to the HAM1 NTPase family. Homodimer. It depends on Mg(2+) as a cofactor.

The catalysed reaction is XTP + H2O = XMP + diphosphate + H(+). It catalyses the reaction dITP + H2O = dIMP + diphosphate + H(+). It carries out the reaction ITP + H2O = IMP + diphosphate + H(+). Its function is as follows. Pyrophosphatase that catalyzes the hydrolysis of nucleoside triphosphates to their monophosphate derivatives, with a high preference for the non-canonical purine nucleotides XTP (xanthosine triphosphate), dITP (deoxyinosine triphosphate) and ITP. Seems to function as a house-cleaning enzyme that removes non-canonical purine nucleotides from the nucleotide pool, thus preventing their incorporation into DNA/RNA and avoiding chromosomal lesions. This is dITP/XTP pyrophosphatase from Deinococcus radiodurans (strain ATCC 13939 / DSM 20539 / JCM 16871 / CCUG 27074 / LMG 4051 / NBRC 15346 / NCIMB 9279 / VKM B-1422 / R1).